We begin with the raw amino-acid sequence, 419 residues long: UDP-N-acetylglucosamine 1-carboxyvinyltransferase 2 (419 aa).

Phosphoenolpyruvate is bound at residue 22-23 (KN). Arginine 92 lines the UDP-N-acetyl-alpha-D-glucosamine pocket. The active-site Proton donor is the cysteine 116. A 2-(S-cysteinyl)pyruvic acid O-phosphothioketal modification is found at cysteine 116. UDP-N-acetyl-alpha-D-glucosamine-binding positions include 121–125 (RPIDL), aspartate 306, and isoleucine 328.

This sequence belongs to the EPSP synthase family. MurA subfamily.

The protein resides in the cytoplasm. The catalysed reaction is phosphoenolpyruvate + UDP-N-acetyl-alpha-D-glucosamine = UDP-N-acetyl-3-O-(1-carboxyvinyl)-alpha-D-glucosamine + phosphate. Its pathway is cell wall biogenesis; peptidoglycan biosynthesis. Its function is as follows. Cell wall formation. Adds enolpyruvyl to UDP-N-acetylglucosamine. The protein is UDP-N-acetylglucosamine 1-carboxyvinyltransferase 2 of Streptococcus mutans serotype c (strain ATCC 700610 / UA159).